Here is a 208-residue protein sequence, read N- to C-terminus: FMN-dependent NADH:quinone oxidoreductase 1 (208 aa).

Position 17–19 (serine 17–serine 19) interacts with FMN.

It belongs to the azoreductase type 1 family. In terms of assembly, homodimer. The cofactor is FMN.

It catalyses the reaction 2 a quinone + NADH + H(+) = 2 a 1,4-benzosemiquinone + NAD(+). It carries out the reaction N,N-dimethyl-1,4-phenylenediamine + anthranilate + 2 NAD(+) = 2-(4-dimethylaminophenyl)diazenylbenzoate + 2 NADH + 2 H(+). In terms of biological role, quinone reductase that provides resistance to thiol-specific stress caused by electrophilic quinones. Its function is as follows. Also exhibits azoreductase activity. Catalyzes the reductive cleavage of the azo bond in aromatic azo compounds to the corresponding amines. The protein is FMN-dependent NADH:quinone oxidoreductase 1 of Listeria innocua serovar 6a (strain ATCC BAA-680 / CLIP 11262).